Here is a 283-residue protein sequence, read N- to C-terminus: ATP phosphoribosyltransferase (283 aa).

The protein belongs to the ATP phosphoribosyltransferase family. Long subfamily. As to quaternary structure, equilibrium between an active dimeric form, an inactive hexameric form and higher aggregates. Interconversion between the various forms is largely reversible and is influenced by the natural substrates and inhibitors of the enzyme. It depends on Mg(2+) as a cofactor.

It is found in the cytoplasm. The catalysed reaction is 1-(5-phospho-beta-D-ribosyl)-ATP + diphosphate = 5-phospho-alpha-D-ribose 1-diphosphate + ATP. The protein operates within amino-acid biosynthesis; L-histidine biosynthesis; L-histidine from 5-phospho-alpha-D-ribose 1-diphosphate: step 1/9. Its activity is regulated as follows. Feedback inhibited by histidine. Catalyzes the condensation of ATP and 5-phosphoribose 1-diphosphate to form N'-(5'-phosphoribosyl)-ATP (PR-ATP). Has a crucial role in the pathway because the rate of histidine biosynthesis seems to be controlled primarily by regulation of HisG enzymatic activity. This is ATP phosphoribosyltransferase from Mycobacterium sp. (strain KMS).